Reading from the N-terminus, the 286-residue chain is Polyamine aminopropyltransferase (286 aa).

Positions 5–238 constitute a PABS domain; sequence TMWHETLHDQ…GIMTFAWATD (234 aa). Gln-33 is a binding site for S-methyl-5'-thioadenosine. Spermidine is bound by residues His-64 and Asp-88. S-methyl-5'-thioadenosine is bound by residues Glu-108 and 140 to 141; that span reads DG. The active-site Proton acceptor is Asp-158. Position 158–161 (158–161) interacts with spermidine; it reads DCTD. Pro-165 is a binding site for S-methyl-5'-thioadenosine.

The protein belongs to the spermidine/spermine synthase family. In terms of assembly, homodimer or homotetramer.

The protein localises to the cytoplasm. It catalyses the reaction S-adenosyl 3-(methylsulfanyl)propylamine + putrescine = S-methyl-5'-thioadenosine + spermidine + H(+). Its pathway is amine and polyamine biosynthesis; spermidine biosynthesis; spermidine from putrescine: step 1/1. Functionally, catalyzes the irreversible transfer of a propylamine group from the amino donor S-adenosylmethioninamine (decarboxy-AdoMet) to putrescine (1,4-diaminobutane) to yield spermidine. The sequence is that of Polyamine aminopropyltransferase from Salmonella enteritidis PT4 (strain P125109).